The sequence spans 206 residues: Imidazoleglycerol-phosphate dehydratase (206 aa).

The interval 1–21 is disordered; the sequence is MTTPSTAPTPAPRKAEVSRNT.

It belongs to the imidazoleglycerol-phosphate dehydratase family.

The protein resides in the cytoplasm. The catalysed reaction is D-erythro-1-(imidazol-4-yl)glycerol 3-phosphate = 3-(imidazol-4-yl)-2-oxopropyl phosphate + H2O. Its pathway is amino-acid biosynthesis; L-histidine biosynthesis; L-histidine from 5-phospho-alpha-D-ribose 1-diphosphate: step 6/9. In Polaromonas sp. (strain JS666 / ATCC BAA-500), this protein is Imidazoleglycerol-phosphate dehydratase.